The sequence spans 283 residues: Release factor glutamine methyltransferase (283 aa).

S-adenosyl-L-methionine is bound by residues 120-124, Asp-143, Phe-172, and Asn-187; that span reads GTGSG. 187–190 is a substrate binding site; the sequence is NPPY.

It belongs to the protein N5-glutamine methyltransferase family. PrmC subfamily.

The catalysed reaction is L-glutaminyl-[peptide chain release factor] + S-adenosyl-L-methionine = N(5)-methyl-L-glutaminyl-[peptide chain release factor] + S-adenosyl-L-homocysteine + H(+). In terms of biological role, methylates the class 1 translation termination release factors RF1/PrfA and RF2/PrfB on the glutamine residue of the universally conserved GGQ motif. The sequence is that of Release factor glutamine methyltransferase from Moorella thermoacetica (strain ATCC 39073 / JCM 9320).